Here is a 3131-residue protein sequence, read N- to C-terminus: Enniatin synthase (3131 aa).

A condensation 1 region spans residues 53–466 (ADDKQRAVGH…VEKVDMMTQE (414 aa)). The segment at 186-212 (NDEHPRQFETPDSSQATPEEDLQPNPS) is disordered. The tract at residues 495–887 (SQSPNKAAVA…GRMDSQVKIR (393 aa)) is adenylation 1. The region spanning 1010–1086 (SSGTDTYTKL…GLKAIVIGTS (77 aa)) is the Carrier 1 domain. Ser1047 carries the O-(pantetheine 4'-phosphoryl)serine modification. The tract at residues 1105–1534 (SYAQNRMWFL…ETCISVLPLT (430 aa)) is condensation 2. The adenylation 2 stretch occupies residues 1563 to 1960 (FREQAAANPE…GRMDNQFKIR (398 aa)). The S-adenosyl-L-methionine-dependent N-methyltransferase stretch occupies residues 2021-2177 (EGWQDHFESG…YLAEVIDGLI (157 aa)). Carrier domains lie at 2504–2578 (FPIS…RQGL) and 2598–2671 (APRT…ESSH). O-(pantetheine 4'-phosphoryl)serine occurs at positions 2538 and 2632. Residues 2718 to 3123 (QDVYPSTQMQ…RHVLEEVCKT (406 aa)) form a condensation 3 region.

This sequence belongs to the ATP-dependent AMP-binding enzyme family. Pantetheine 4'-phosphate is required as a cofactor. Post-translationally, the N-terminus is blocked.

It functions in the pathway antibiotic biosynthesis; enniatin biosynthesis. With respect to regulation, the N-methylation activity is inhibited by S-adenosyl-L-homocysteine and sinefugin. Functionally, nonribosomal peptide synthetase that synthesizes enniatin by coupling three D-hydroxycarboxylic acids and three L-amino acids via amide and ester bonds in an alternating fashion. Whereas ESYN1 can accept different amino acids as precursors (L -valine, L-isoleucine or L-leucine), only one species of D-hydroxycarboxylic acid can be found in natural enniatin isolates (D-hydroxyisovaleric acid, D-Hiv). D-Hiv stems from L-valine deanimation by a valine aminotransferase to 2-keto-isovaleric acid (2-Kiv), which becomes subsequently reduced by a keto-isovaleric acid reductase (KivR) to D-Hiv. Peptide bond formation and N-methylation of the amino acid occur before three enzyme-bound dipeptidols are condensed to a hexapeptidol. The sequence is that of Enniatin synthase from Fusarium equiseti (Fusarium scirpi).